An 87-amino-acid polypeptide reads, in one-letter code: Putative outer membrane protein ArbH (87 aa).

The N-terminal stretch at 1 to 23 (MKIKNSYLVIASLLYPISFISTA) is a signal peptide.

The protein belongs to the porin LamB (TC 1.B.3) family.

It is found in the cell outer membrane. May be a sugar porin with a broad carbohydrate specificity. The protein is Putative outer membrane protein ArbH (arbH) of Dickeya chrysanthemi (Pectobacterium chrysanthemi).